The following is a 478-amino-acid chain: Putative indole-3-acetic acid-amido synthetase GH3.10 (478 aa).

Belongs to the IAA-amido conjugating enzyme family.

Its function is as follows. May catalyze the synthesis of indole-3-acetic acid (IAA)-amino acid conjugates, providing a mechanism for the plant to cope with the presence of excess auxin. This chain is Putative indole-3-acetic acid-amido synthetase GH3.10 (GH3.10), found in Oryza sativa subsp. japonica (Rice).